A 206-amino-acid chain; its full sequence is Large ribosomal subunit protein bL25 (206 aa).

This sequence belongs to the bacterial ribosomal protein bL25 family. CTC subfamily. As to quaternary structure, part of the 50S ribosomal subunit; part of the 5S rRNA/L5/L18/L25 subcomplex. Contacts the 5S rRNA. Binds to the 5S rRNA independently of L5 and L18.

This is one of the proteins that binds to the 5S RNA in the ribosome where it forms part of the central protuberance. In Ralstonia nicotianae (strain ATCC BAA-1114 / GMI1000) (Ralstonia solanacearum), this protein is Large ribosomal subunit protein bL25.